An 86-amino-acid chain; its full sequence is Large ribosomal subunit protein bL31 (86 aa).

Zn(2+) contacts are provided by Cys16, Cys18, Cys38, and Cys41.

The protein belongs to the bacterial ribosomal protein bL31 family. Type A subfamily. In terms of assembly, part of the 50S ribosomal subunit. Zn(2+) serves as cofactor.

Binds the 23S rRNA. The polypeptide is Large ribosomal subunit protein bL31 (Acidothermus cellulolyticus (strain ATCC 43068 / DSM 8971 / 11B)).